The following is a 542-amino-acid chain: Coiled-coil domain-containing protein 60 (542 aa).

Residues 70-97 (TMLQEETAFKKHQQHLKKLQEEELNKFQ) are a coiled coil. 2 disordered regions span residues 228–284 (ATRK…EEEV) and 334–358 (QTTH…TQKK). 2 stretches are compositionally biased toward low complexity: residues 245–261 (SGGS…NPSS) and 342–351 (RSSTTSGESH).

This chain is Coiled-coil domain-containing protein 60 (Ccdc60), found in Rattus norvegicus (Rat).